The following is an 809-amino-acid chain: Interleukin-4 receptor subunit alpha (809 aa).

The signal sequence occupies residues 1–25 (MGCLCPGLTLPVSCLILVWAAGSGS). The Extracellular segment spans residues 26–231 (VKVLRLTACF…NYYEQPLEQR (206 aa)). Residues Cys34 and Cys44 are joined by a disulfide bond. N-linked (GlcNAc...) asparagine glycans are attached at residues Asn53 and Asn71. A disulfide bridge links Cys74 with Cys86. 3 N-linked (GlcNAc...) asparagine glycosylation sites follow: Asn112, Asn128, and Asn161. One can recognise a Fibronectin type-III domain in the interval 125–222 (APQNLTVHAI…EWSPSTTWHN (98 aa)). The residue at position 163 (Ser163) is a Phosphoserine. N-linked (GlcNAc...) asparagine glycans are attached at residues Asn175 and Asn208. Positions 211–215 (WSEWS) match the WSXWS motif motif. Residues 232 to 255 (LPLGVSISCVVILAICLSCYFSII) traverse the membrane as a helical segment. Residues 256-809 (KIKKEWWDQI…STGPTCTSAS (554 aa)) lie on the Cytoplasmic side of the membrane. The Box 1 motif motif lies at 261–269 (WWDQIPNPA). Disordered regions lie at residues 369–397 (ESEE…QEGR) and 441–468 (SAGP…TLTQ). Residues 447–468 (AASQGEEQPLNPESNPLATLTQ) are compositionally biased toward polar residues. Tyr488 is modified (phosphotyrosine). The segment at 514-536 (LGQVDPSIPSAPQPSEPPTALQP) is disordered. Phosphotyrosine occurs at positions 566, 590, and 618. The tract at residues 606–674 (QSGVEASSGE…EPTVKGEDPR (69 aa)) is disordered. The ITIM motif signature appears at 695–700 (IVYSAL).

This sequence belongs to the type I cytokine receptor family. Type 4 subfamily. As to quaternary structure, the functional IL4 receptor is formed by initial binding of IL4 to IL4R. Subsequent recruitment to the complex of the common gamma chain, in immune cells, creates a type I receptor and, in non-immune cells, of IL13RA1 forms a type II receptor. IL4R can also interact with the IL13/IL13RA1 complex to form a similar type II receptor. Interacts with PIK3C3. Interacts with the SH2-containing phosphatases, PTPN6/SHIP1, PTPN11/SHIP2 and INPP5D/SHIP. Interacts with JAK1 through a Box 1-containing region; inhibited by SOCS5. Interacts with SOCS5; inhibits IL4 signaling. Interacts with JAK3. Interacts with CLM1. Interacts with IL13RA2. In terms of processing, on IL4 binding, phosphorylated on tyrosine residues in the cytoplasmic domain.

It is found in the cell membrane. It localises to the secreted. Functionally, receptor for both interleukin 4 and interleukin 13. Couples to the JAK1/2/3-STAT6 pathway. The IL4 response is involved in promoting Th2 differentiation. The IL4/IL13 responses are involved in regulating IgE production and, chemokine and mucus production at sites of allergic inflammation. In certain cell types, can signal through activation of insulin receptor substrates, IRS1/IRS2. This is Interleukin-4 receptor subunit alpha (IL4R) from Equus caballus (Horse).